Reading from the N-terminus, the 123-residue chain is Fluoride-specific ion channel FluC (123 aa).

Transmembrane regions (helical) follow at residues 1–21, 32–52, 66–86, and 94–114; these read MQWL…GWLA, LGTL…LVWF, FVIT…AEVF, and LLAA…ATAL. Residues Gly73 and Thr76 each coordinate Na(+).

It belongs to the fluoride channel Fluc/FEX (TC 1.A.43) family.

Its subcellular location is the cell inner membrane. It carries out the reaction fluoride(in) = fluoride(out). With respect to regulation, na(+) is not transported, but it plays an essential structural role and its presence is essential for fluoride channel function. Functionally, fluoride-specific ion channel. Important for reducing fluoride concentration in the cell, thus reducing its toxicity. This Psychrobacter arcticus (strain DSM 17307 / VKM B-2377 / 273-4) protein is Fluoride-specific ion channel FluC.